The following is a 360-amino-acid chain: Membrane-bound lytic murein transglycosylase C (360 aa).

A signal peptide spans 1–16 (MKKLLALAVIAPLLIS). The N-palmitoyl cysteine moiety is linked to residue C17. Residue C17 is the site of S-diacylglycerol cysteine attachment.

Belongs to the transglycosylase Slt family.

Its subcellular location is the cell outer membrane. It carries out the reaction Exolytic cleavage of the (1-&gt;4)-beta-glycosidic linkage between N-acetylmuramic acid (MurNAc) and N-acetylglucosamine (GlcNAc) residues in peptidoglycan, from either the reducing or the non-reducing ends of the peptidoglycan chains, with concomitant formation of a 1,6-anhydrobond in the MurNAc residue.. Its function is as follows. Murein-degrading enzyme. May play a role in recycling of muropeptides during cell elongation and/or cell division. This chain is Membrane-bound lytic murein transglycosylase C, found in Salmonella paratyphi A (strain ATCC 9150 / SARB42).